We begin with the raw amino-acid sequence, 48 residues long: ATP synthase protein 8 (48 aa).

A helical membrane pass occupies residues 13–32 (VVFTLISLSFIFFVFSKYIL).

The protein belongs to the ATPase protein 8 family. As to quaternary structure, F-type ATPases have 2 components, CF(1) - the catalytic core - and CF(0) - the membrane proton channel.

It is found in the mitochondrion membrane. Its function is as follows. Mitochondrial membrane ATP synthase (F(1)F(0) ATP synthase or Complex V) produces ATP from ADP in the presence of a proton gradient across the membrane which is generated by electron transport complexes of the respiratory chain. F-type ATPases consist of two structural domains, F(1) - containing the extramembraneous catalytic core and F(0) - containing the membrane proton channel, linked together by a central stalk and a peripheral stalk. During catalysis, ATP synthesis in the catalytic domain of F(1) is coupled via a rotary mechanism of the central stalk subunits to proton translocation. Part of the complex F(0) domain. Minor subunit located with subunit a in the membrane. The sequence is that of ATP synthase protein 8 (ATP8) from Trichophyton rubrum (Athlete's foot fungus).